Here is a 209-residue protein sequence, read N- to C-terminus: uncharacterized protein (209 aa).

The span at 1–11 shows a compositional bias: basic and acidic residues; it reads MMRTNAGKETK. Positions 1 to 20 are disordered; it reads MMRTNAGKETKGYNPAPADS.

This is an uncharacterized protein from Caenorhabditis elegans.